A 366-amino-acid polypeptide reads, in one-letter code: Protein lifeguard 1 (366 aa).

Positions 1–141 are disordered; that stretch reads MSHEKSFLVS…GPPSYYDNQD (141 aa). Composition is skewed to pro residues over residues 14–44 and 67–109; these read YPPP…PFQP and GPYP…PNPY. Helical transmembrane passes span 160-180, 192-212, 223-243, 248-268, 278-298, 302-322, and 341-361; these read VFLV…VFTF, VWTY…LSCC, LVAL…IASF, AVIM…IFSM, VGVL…CIFI, VLEI…LAVD, and FAAL…LTII.

The protein belongs to the BI1 family. LFG subfamily.

The protein resides in the membrane. Functionally, potential apoptotic regulator. The chain is Protein lifeguard 1 (GRINA) from Bos taurus (Bovine).